The sequence spans 301 residues: Putative hydro-lyase C5H10.01 (301 aa).

The protein belongs to the D-glutamate cyclase family.

The chain is Putative hydro-lyase C5H10.01 from Schizosaccharomyces pombe (strain 972 / ATCC 24843) (Fission yeast).